The chain runs to 298 residues: Tyrosine recombinase XerC (298 aa).

The Core-binding (CB) domain maps to 1-84 (MNHIQEAFLN…TLRTFYEYWM (84 aa)). In terms of domain architecture, Tyr recombinase spans 105-286 (YLPQFFYEEE…SNQQLRKVYL (182 aa)). Residues Arg145, Lys169, His238, Arg241, and His264 contribute to the active site. Tyr273 (O-(3'-phospho-DNA)-tyrosine intermediate) is an active-site residue.

It belongs to the 'phage' integrase family. XerC subfamily. In terms of assembly, forms a cyclic heterotetrameric complex composed of two molecules of XerC and two molecules of XerD.

It localises to the cytoplasm. Functionally, site-specific tyrosine recombinase, which acts by catalyzing the cutting and rejoining of the recombining DNA molecules. The XerC-XerD complex is essential to convert dimers of the bacterial chromosome into monomers to permit their segregation at cell division. It also contributes to the segregational stability of plasmids. The chain is Tyrosine recombinase XerC from Staphylococcus aureus (strain JH1).